The following is a 779-amino-acid chain: Endonuclease MutS2 (779 aa).

328–335 contributes to the ATP binding site; it reads GPNTGGKT. In terms of domain architecture, Smr spans 704 to 779; the sequence is LDLRGKRYEE…GSGATIVTLG (76 aa).

This sequence belongs to the DNA mismatch repair MutS family. MutS2 subfamily. Homodimer. Binds to stalled ribosomes, contacting rRNA.

Functionally, endonuclease that is involved in the suppression of homologous recombination and thus may have a key role in the control of bacterial genetic diversity. In terms of biological role, acts as a ribosome collision sensor, splitting the ribosome into its 2 subunits. Detects stalled/collided 70S ribosomes which it binds and splits by an ATP-hydrolysis driven conformational change. Acts upstream of the ribosome quality control system (RQC), a ribosome-associated complex that mediates the extraction of incompletely synthesized nascent chains from stalled ribosomes and their subsequent degradation. Probably generates substrates for RQC. The protein is Endonuclease MutS2 of Streptococcus pyogenes serotype M49 (strain NZ131).